The sequence spans 365 residues: Flagellar P-ring protein (365 aa).

The signal sequence occupies residues 1–19 (MIKFLSALILLLVTTAAQA).

The protein belongs to the FlgI family. In terms of assembly, the basal body constitutes a major portion of the flagellar organelle and consists of four rings (L,P,S, and M) mounted on a central rod.

The protein resides in the periplasm. It is found in the bacterial flagellum basal body. Assembles around the rod to form the L-ring and probably protects the motor/basal body from shearing forces during rotation. In Shigella flexneri serotype 5b (strain 8401), this protein is Flagellar P-ring protein.